A 904-amino-acid polypeptide reads, in one-letter code: MAASVENRQFSHLEAGLSRSFKPRSDSPVRGCNFPSPNSTNFQKKPNSTIYLDYSSSEDDDDDDEKNEYLQMIKKGNSELEPSVHDTRDEGTADNWIERNFSMIRLTGKHPFNSEPPLNRLMHHGFITPVPLHYVRNHGPVPKGTWDDWTVEVTGLVKRPMKFTMDQLVNEFPCRELPVTLVCAGNRRKEQNMVKQTIGFNWGAAAVSTTIWRGVPLRALLKRCGVFSKNKGALNVCFEGADVLPGGGGSKYGTSIKKEFAMDPARDIIVAYMQNGEKLAPDHGFPVRMIIPGFIGGRMVKWIKRIIVTTQESDSYYHFKDNRVLPPHVDAELANTEAWWYKPEYIINELNINSVITTPCHEEILPINAWTTQRPYTLRGYSYSGGGKKVTRVEVTLDGGETWQVSTLDHPEKPTKYGKYWCWCFWSLEVEVLDLLSAKEIAVRAWDETLNTQPEKLIWNVMGMMNNCWFRVKMNVCKPHKGEIGIVFEHPTQPGNQSGGWMAKERHLEISAEAPQTLKKSISTPFMNTASKMYSMSEVRKHSSADSAWIIVHGHIYDATRFLKDHPGGTDSILINAGTDCTEEFDAIHSDKAKKLLEDFRIGELITTGYTSDSPGNSVHGSSSFSSFLAPIKELVPAQRSVALIPREKIPCKLIDKQSISHDVRKFRFALPSEDQVLGLPVGKHIFLCAVIDDKLCMRAYTPTSTIDEVGYFELVVKIYFKGIHPKFPNGGQMSQYLDSMPLGSFLDVKGPLGHIEYQGKGNFLVHGKQKFAKKLAMIAGGTGITPVYQVMQAILKDPEDDTEMYVVYANRTEDDILLKEELDSWAEKIPERVKVWYVVQDSIKEGWKYSIGFITEAILREHIPEPSHTTLALACGPPPMIQFAVNPNLEKMGYDIKDSLLVF.

2 stretches are compositionally biased toward polar residues: residues 1–10 (MAASVENRQF) and 35–50 (PSPN…NSTI). Residues 1 to 65 (MAASVENRQF…SSEDDDDDDE (65 aa)) are disordered. Residues 56 to 65 (SSEDDDDDDE) show a composition bias toward acidic residues. Cysteine 183 is a binding site for Mo-molybdopterin. The region spanning 531 to 606 (SKMYSMSEVR…LEDFRIGELI (76 aa)) is the Cytochrome b5 heme-binding domain. Histidine 566 and histidine 589 together coordinate heme. In terms of domain architecture, FAD-binding FR-type spans 647-759 (REKIPCKLID…KGPLGHIEYQ (113 aa)). FAD is bound by residues 699–702 (RAYT), 716–720 (VVKIY), phenylalanine 721, phenylalanine 728, 733–735 (QMS), and threonine 786.

This sequence belongs to the nitrate reductase family. Homodimer. FAD serves as cofactor. It depends on heme as a cofactor. Requires Mo-molybdopterin as cofactor.

It carries out the reaction nitrite + NAD(+) + H2O = nitrate + NADH + H(+). Its activity is regulated as follows. Regulated by the nitrogen source and controlled by the circadian rhythm. Nitrate reductase is a key enzyme involved in the first step of nitrate assimilation in plants, fungi and bacteria. The chain is Nitrate reductase [NADH] 2 (NIA2) from Nicotiana tabacum (Common tobacco).